A 231-amino-acid chain; its full sequence is Sugar fermentation stimulation protein homolog (231 aa).

This sequence belongs to the SfsA family.

The sequence is that of Sugar fermentation stimulation protein homolog from Syntrophotalea carbinolica (strain DSM 2380 / NBRC 103641 / GraBd1) (Pelobacter carbinolicus).